We begin with the raw amino-acid sequence, 217 residues long: MARQTYNYHVTHFVTSAPDIRHLPEDTGIEVAFAGRSNAGKSSALNTLTNQKSLARTSKTPGRTQLINLFEVEDGIRLVDLPGYGYAEVPEEMKRKWQQALGEYLQKRQCLKGLVVLMDIRHPLKDLDQQMIAWAVEVGLPVLLLLTKADKLASGARKAQLNMVREAVLPFMGDIQVDAFSSLKKFGVDKLRDKLDTWFSEITPQQADKDDDPSIGE.

The 175-residue stretch at 27-201 (TGIEVAFAGR…RDKLDTWFSE (175 aa)) folds into the EngB-type G domain. Residues 35–42 (GRSNAGKS), 62–66 (GRTQL), 80–83 (DLPG), 147–150 (TKAD), and 180–182 (FSS) contribute to the GTP site. Mg(2+) is bound by residues Ser-42 and Thr-64.

Belongs to the TRAFAC class TrmE-Era-EngA-EngB-Septin-like GTPase superfamily. EngB GTPase family. Mg(2+) is required as a cofactor.

Necessary for normal cell division and for the maintenance of normal septation. This is Probable GTP-binding protein EngB from Edwardsiella ictaluri (strain 93-146).